Reading from the N-terminus, the 353-residue chain is Major outer membrane protein (353 aa).

A signal peptide spans 1–20 (MKKTIVALAVAAVAATSANA).

As to quaternary structure, disulfide bond interactions within and between MOMP molecules and other components form high molecular-weight oligomers.

It is found in the cell outer membrane. In terms of biological role, structural rigidity of the outer membrane of elementary bodies and porin forming, permitting diffusion of solutes through the intracellular reticulate body membrane. This Pasteurella multocida protein is Major outer membrane protein (ompH).